Reading from the N-terminus, the 599-residue chain is Sulfite reductase [NADPH] flavoprotein alpha-component (599 aa).

Residues 64–202 form the Flavodoxin-like domain; sequence ITIISASQTG…AASEWRARVV (139 aa). FMN is bound by residues 70–75, 117–120, and 153–162; these read SQTGNA, STQG, and LGDSSYEFFC. The FAD-binding FR-type domain occupies 234-448; sequence DAPLAASLSV…IEHNDNFRLP (215 aa). FAD is bound by residues Thr-322, Ala-356, 386-389, 404-406, Tyr-410, and 419-422; these read RLYS, TVG, and GGAS. NADP(+) contacts are provided by residues 519–520, 525–529, and Asp-561; these read SR and KIYVQ. Tyr-599 contributes to the FAD binding site.

It belongs to the NADPH-dependent sulphite reductase flavoprotein subunit CysJ family. The protein in the N-terminal section; belongs to the flavodoxin family. In the C-terminal section; belongs to the flavoprotein pyridine nucleotide cytochrome reductase family. As to quaternary structure, alpha(8)-beta(8). The alpha component is a flavoprotein, the beta component is a hemoprotein. It depends on FAD as a cofactor. Requires FMN as cofactor.

It catalyses the reaction hydrogen sulfide + 3 NADP(+) + 3 H2O = sulfite + 3 NADPH + 4 H(+). It functions in the pathway sulfur metabolism; hydrogen sulfide biosynthesis; hydrogen sulfide from sulfite (NADPH route): step 1/1. In terms of biological role, component of the sulfite reductase complex that catalyzes the 6-electron reduction of sulfite to sulfide. This is one of several activities required for the biosynthesis of L-cysteine from sulfate. The flavoprotein component catalyzes the electron flow from NADPH -&gt; FAD -&gt; FMN to the hemoprotein component. The protein is Sulfite reductase [NADPH] flavoprotein alpha-component of Escherichia coli O6:H1 (strain CFT073 / ATCC 700928 / UPEC).